The chain runs to 217 residues: PTB-containing, cubilin and LRP1-interacting protein (217 aa).

One can recognise a PID domain in the interval 60-217 (VTYLGKVSTT…ASQELESDDG (158 aa)). The segment at 194-217 (KSDGRIHRSSSSEEASQELESDDG) is disordered. Phosphoserine occurs at positions 202, 203, and 214. A compositionally biased stretch (acidic residues) spans 208–217 (ASQELESDDG).

Found in a complex with PID1/PCLI1, LRP1 and CUBNI. Interacts with LRP1 and CUBN.

Its subcellular location is the cytoplasm. In terms of biological role, increases proliferation of preadipocytes without affecting adipocytic differentiation. This Mus musculus (Mouse) protein is PTB-containing, cubilin and LRP1-interacting protein (Pid1).